The primary structure comprises 284 residues: Pseudopaline exporter CntI (284 aa).

The next 10 helical transmembrane spans lie at 2-22 (VLDL…TFSV), 34-54 (LPAA…IYLL), 74-94 (GVMG…IPLA), 96-116 (ASIL…LFLG), 122-142 (AVYW…KPFS), 147-167 (SVYA…SVAI), 179-199 (IVFY…WSDF), 209-229 (GLLL…TRAF), 236-256 (IVAV…WLFW), and 259-279 (VPDA…IALS). EamA domains lie at 8-138 (SGVL…LMIV) and 151-279 (VVGL…IALS).

This sequence belongs to the EamA transporter family.

The protein localises to the cell inner membrane. Its function is as follows. Transports the metallophore pseudopaline, which is involved in the acquisition of nickel and zinc, and thus enables bacterial growth inside the host, where metal access is limited. Is probably involved in the export of pseudopaline. The polypeptide is Pseudopaline exporter CntI (Pseudomonas aeruginosa (strain UCBPP-PA14)).